The following is a 71-amino-acid chain: Protein translocase subunit SecE (71 aa).

A helical transmembrane segment spans residues 43 to 63; it reads VAGAGILAVGAVGFIIYVLLT.

This sequence belongs to the SecE/SEC61-gamma family. As to quaternary structure, component of the Sec protein translocase complex. Heterotrimer consisting of SecY (alpha), SecG (beta) and SecE (gamma) subunits. The heterotrimers can form oligomers, although 1 heterotrimer is thought to be able to translocate proteins. Interacts with the ribosome. May interact with SecDF, and other proteins may be involved.

Its subcellular location is the cell membrane. Functionally, essential subunit of the Sec protein translocation channel SecYEG. Clamps together the 2 halves of SecY. May contact the channel plug during translocation. This chain is Protein translocase subunit SecE, found in Methanosarcina mazei (strain ATCC BAA-159 / DSM 3647 / Goe1 / Go1 / JCM 11833 / OCM 88) (Methanosarcina frisia).